The primary structure comprises 202 residues: GTP cyclohydrolase 1 (202 aa).

Zn(2+)-binding residues include cysteine 90, histidine 93, and cysteine 163.

Belongs to the GTP cyclohydrolase I family. In terms of assembly, homomer.

It carries out the reaction GTP + H2O = 7,8-dihydroneopterin 3'-triphosphate + formate + H(+). It participates in cofactor biosynthesis; 7,8-dihydroneopterin triphosphate biosynthesis; 7,8-dihydroneopterin triphosphate from GTP: step 1/1. The polypeptide is GTP cyclohydrolase 1 (Mycobacterium marinum (strain ATCC BAA-535 / M)).